Here is a 345-residue protein sequence, read N- to C-terminus: Selenide, water dikinase (345 aa).

Cysteine 15 is an active-site residue. Residues lysine 18 and 46 to 48 (SKD) each bind ATP. Aspartate 49 contributes to the Mg(2+) binding site. ATP contacts are provided by residues aspartate 66, aspartate 89, and 137 to 139 (GHS). A Mg(2+)-binding site is contributed by aspartate 89. A Mg(2+)-binding site is contributed by aspartate 225.

This sequence belongs to the selenophosphate synthase 1 family. Class I subfamily. As to quaternary structure, homodimer. Mg(2+) is required as a cofactor.

It carries out the reaction hydrogenselenide + ATP + H2O = selenophosphate + AMP + phosphate + 2 H(+). Functionally, synthesizes selenophosphate from selenide and ATP. This Aeromonas salmonicida (strain A449) protein is Selenide, water dikinase.